The following is a 301-amino-acid chain: Ribosomal RNA small subunit methyltransferase A (301 aa).

The S-adenosyl-L-methionine site is built by Asn-23, Ile-25, Gly-50, Glu-72, Asp-97, and Asn-149.

The protein belongs to the class I-like SAM-binding methyltransferase superfamily. rRNA adenine N(6)-methyltransferase family. RsmA subfamily.

The protein resides in the cytoplasm. It catalyses the reaction adenosine(1518)/adenosine(1519) in 16S rRNA + 4 S-adenosyl-L-methionine = N(6)-dimethyladenosine(1518)/N(6)-dimethyladenosine(1519) in 16S rRNA + 4 S-adenosyl-L-homocysteine + 4 H(+). Its function is as follows. Specifically dimethylates two adjacent adenosines (A1518 and A1519) in the loop of a conserved hairpin near the 3'-end of 16S rRNA in the 30S particle. May play a critical role in biogenesis of 30S subunits. In Rickettsia peacockii (strain Rustic), this protein is Ribosomal RNA small subunit methyltransferase A.